The chain runs to 337 residues: Protein RecA (337 aa).

66-73 is an ATP binding site; it reads GPESSGKT.

The protein belongs to the RecA family.

The protein resides in the cytoplasm. Its function is as follows. Can catalyze the hydrolysis of ATP in the presence of single-stranded DNA, the ATP-dependent uptake of single-stranded DNA by duplex DNA, and the ATP-dependent hybridization of homologous single-stranded DNAs. It interacts with LexA causing its activation and leading to its autocatalytic cleavage. The sequence is that of Protein RecA from Mesomycoplasma hyopneumoniae (strain 232) (Mycoplasma hyopneumoniae).